A 511-amino-acid polypeptide reads, in one-letter code: UPF0288 protein MK0796 (511 aa).

The protein belongs to the UPF0288 family.

The chain is UPF0288 protein MK0796 from Methanopyrus kandleri (strain AV19 / DSM 6324 / JCM 9639 / NBRC 100938).